The sequence spans 76 residues: Conotoxin Ca11b (76 aa).

An N-terminal signal peptide occupies residues 1–19 (MKLVLAIVVILMLLSLSTG). The propeptide occupies 20 to 42 (AEMSDNHASMSANALRDRLLGPK). Cystine bridges form between cysteine 46–cysteine 60, cysteine 53–cysteine 65, cysteine 59–cysteine 69, and cysteine 64–cysteine 76.

In terms of tissue distribution, expressed by the venom duct.

It is found in the secreted. This Conus caracteristicus (Characteristic cone) protein is Conotoxin Ca11b.